We begin with the raw amino-acid sequence, 183 residues long: Threonylcarbamoyl-AMP synthase (183 aa).

Positions 1 to 183 (MNREQIANAL…LRTNQLFRQG (183 aa)) constitute a YrdC-like domain.

Belongs to the SUA5 family. TsaC subfamily.

The protein localises to the cytoplasm. The enzyme catalyses L-threonine + hydrogencarbonate + ATP = L-threonylcarbamoyladenylate + diphosphate + H2O. Functionally, required for the formation of a threonylcarbamoyl group on adenosine at position 37 (t(6)A37) in tRNAs that read codons beginning with adenine. Catalyzes the conversion of L-threonine, HCO(3)(-)/CO(2) and ATP to give threonylcarbamoyl-AMP (TC-AMP) as the acyladenylate intermediate, with the release of diphosphate. The sequence is that of Threonylcarbamoyl-AMP synthase from Haemophilus influenzae (strain PittEE).